Here is a 272-residue protein sequence, read N- to C-terminus: 3-methyl-2-oxobutanoate hydroxymethyltransferase (272 aa).

Residues D52 and D91 each coordinate Mg(2+). Residues 52-53 (DS), D91, and K121 each bind 3-methyl-2-oxobutanoate. Mg(2+) is bound at residue E123. Residue E190 is the Proton acceptor of the active site.

It belongs to the PanB family. Homodecamer; pentamer of dimers. Mg(2+) serves as cofactor.

Its subcellular location is the cytoplasm. The catalysed reaction is 3-methyl-2-oxobutanoate + (6R)-5,10-methylene-5,6,7,8-tetrahydrofolate + H2O = 2-dehydropantoate + (6S)-5,6,7,8-tetrahydrofolate. It functions in the pathway cofactor biosynthesis; (R)-pantothenate biosynthesis; (R)-pantoate from 3-methyl-2-oxobutanoate: step 1/2. Its function is as follows. Catalyzes the reversible reaction in which hydroxymethyl group from 5,10-methylenetetrahydrofolate is transferred onto alpha-ketoisovalerate to form ketopantoate. This Cytophaga hutchinsonii (strain ATCC 33406 / DSM 1761 / CIP 103989 / NBRC 15051 / NCIMB 9469 / D465) protein is 3-methyl-2-oxobutanoate hydroxymethyltransferase.